We begin with the raw amino-acid sequence, 174 residues long: FMN-dependent NADPH-azoreductase (174 aa).

FMN is bound by residues 9–11, 15–16, 73–76, and Gly106; these read TPR, RT, and EYHS.

It belongs to the azoreductase type 2 family. In terms of assembly, homotetramer. It depends on FMN as a cofactor.

Catalyzes the reductive cleavage of azo bond in aromatic azo compounds to the corresponding amines. Requires NADPH, but not NADH, as an electron donor for its activity. The protein is FMN-dependent NADPH-azoreductase (azr) of Bacillus subtilis (strain 168).